A 334-amino-acid polypeptide reads, in one-letter code: Fructose-1,6-bisphosphatase class 1 (334 aa).

Positions 89, 112, 114, and 115 each coordinate Mg(2+). Residues 115–118, N208, Y241, and K271 each bind substrate; that span reads DGSS. E277 serves as a coordination point for Mg(2+).

It belongs to the FBPase class 1 family. In terms of assembly, homotetramer. Requires Mg(2+) as cofactor.

It is found in the cytoplasm. The enzyme catalyses beta-D-fructose 1,6-bisphosphate + H2O = beta-D-fructose 6-phosphate + phosphate. It participates in carbohydrate biosynthesis; gluconeogenesis. The chain is Fructose-1,6-bisphosphatase class 1 from Photorhabdus laumondii subsp. laumondii (strain DSM 15139 / CIP 105565 / TT01) (Photorhabdus luminescens subsp. laumondii).